Reading from the N-terminus, the 340-residue chain is CRISPR-associated protein Cas7 (340 aa).

In terms of assembly, component of the Cascade-like complex (Cascade I-B), composed of Cas5, Cas6, Cas7 and crRNA.

The protein resides in the cytoplasm. In terms of biological role, CRISPR (clustered regularly interspaced short palindromic repeat) is an adaptive immune system that provides protection against mobile genetic elements (viruses, transposable elements and conjugative plasmids). CRISPR clusters contain sequences complementary to antecedent mobile elements and target invading nucleic acids. CRISPR clusters are transcribed and processed into CRISPR RNA (crRNA). Plasmid targeted by CRISPR locus P1 transform wild-type cells very poorly. This protein helps process or stabilize pre-crRNA into individual crRNA units, in vivo Cas6 and Cas7 are also required for optimal crRNA processing and/or stability. The chain is CRISPR-associated protein Cas7 from Haloferax volcanii (strain ATCC 29605 / DSM 3757 / JCM 8879 / NBRC 14742 / NCIMB 2012 / VKM B-1768 / DS2) (Halobacterium volcanii).